Reading from the N-terminus, the 178-residue chain is MAKTAIAYKEKMKELSMLSLICSCFYPEPRNITAYTYDDMEIKQLNKRASGQAFELILKPPSPVSEAPRTLASPKKKDVSLGEIQAKLEAAEDRRKSQEAQILKQLAEKREHEREVLQKALEENNNFSRMAEEKLILKMEQIKENREYYLASLMERLKEKERHAAEVRRNKEQLELSG.

One can recognise an SLD domain in the interval 38–178 (DDMEIKQLNK…RNKEQLELSG (141 aa)). Residues 75–178 (KKKDVSLGEI…RNKEQLELSG (104 aa)) adopt a coiled-coil conformation.

It belongs to the stathmin family. In terms of tissue distribution, nervous tissue.

The protein localises to the cytoplasm. Its subcellular location is the membrane. It is found in the cell projection. The protein resides in the lamellipodium. This is Stathmin-2-A (stmn2-a) from Xenopus laevis (African clawed frog).